A 59-amino-acid chain; its full sequence is RVLLTICLLLFPLTAIPLGGDQPAERMRNVRSAVQDPRFDSVGWCCPIQGCILGCTPCC.

The N-terminal stretch at 1 to 15 is a signal peptide; that stretch reads RVLLTICLLLFPLTA. The propeptide occupies 16–44; that stretch reads IPLGGDQPAERMRNVRSAVQDPRFDSVGW. 3 disulfide bridges follow: cysteine 45/cysteine 59, cysteine 46/cysteine 55, and cysteine 51/cysteine 58.

Belongs to the conotoxin M superfamily. In terms of tissue distribution, expressed by the venom duct.

Its subcellular location is the secreted. The sequence is that of Conotoxin reg3.15 from Conus regius (Crown cone).